Here is a 227-residue protein sequence, read N- to C-terminus: Riboflavin kinase (227 aa).

The segment at 1 to 92 is H-T-H motif-like; it reads MSKDYEVFPL…LKRTIDSSTF (92 aa). Positions 93–227 are riboflavin kinase; the sequence is LTLRGYVVPG…GDKVEVVIPV (135 aa). 102–107 contributes to the CDP binding site; it reads GLGEGA. 2 residues coordinate Mg(2+): T131 and N133. FMN is bound by residues T194 and E202. 207-210 serves as a coordination point for CDP; that stretch reads VRLR.

This sequence belongs to the archaeal riboflavin kinase family. Mg(2+) serves as cofactor.

The catalysed reaction is riboflavin + CTP = CDP + FMN + H(+). It participates in cofactor biosynthesis; FMN biosynthesis; FMN from riboflavin (CTP route): step 1/1. Catalyzes the CTP-dependent phosphorylation of riboflavin (vitamin B2) to form flavin mononucleotide (FMN). In Thermofilum pendens (strain DSM 2475 / Hrk 5), this protein is Riboflavin kinase (ribK).